Here is a 1152-residue protein sequence, read N- to C-terminus: Alpha-mannosidase 2x (1152 aa).

The Cytoplasmic segment spans residues 1 to 5; sequence MKLKK. Residues 6–26 form a helical; Signal-anchor for type II membrane protein membrane-spanning segment; that stretch reads QVTVCGAAIFCVAVFSLYLML. The Lumenal portion of the chain corresponds to 27-796; the sequence is DRVQHDPARH…VDEEQEQQME (770 aa). A coiled-coil region spans residues 43 to 74; sequence PRSQISVLQNRIEQLEQLLEENHDIISRIKDS. 2 residues coordinate Zn(2+): H175 and D177. The N-linked (GlcNAc...) asparagine glycan is linked to N225. D289 contacts Zn(2+). The Nucleophile role is filled by D289. N-linked (GlcNAc...) asparagine glycosylation is present at N305. H569 contributes to the Zn(2+) binding site.

The protein belongs to the glycosyl hydrolase 38 family. As to quaternary structure, homodimer; disulfide-linked. Interacts with MGAT4D. Requires Zn(2+) as cofactor.

It is found in the golgi apparatus membrane. It catalyses the reaction N(4)-{beta-D-GlcNAc-(1-&gt;2)-alpha-D-Man-(1-&gt;3)-[alpha-D-Man-(1-&gt;3)-[alpha-D-Man-(1-&gt;6)]-alpha-D-Man-(1-&gt;6)]-beta-D-Man-(1-&gt;4)-beta-D-GlcNAc-(1-&gt;4)-beta-D-GlcNAc}-L-asparaginyl-[protein] + 2 H2O = 2 alpha-D-mannopyranose + an N(4)-{beta-D-GlcNAc-(1-&gt;2)-alpha-D-Man-(1-&gt;3)-[alpha-D-Man-(1-&gt;6)]-beta-D-Man-(1-&gt;4)-beta-D-GlcNAc-(1-&gt;4)-beta-D-GlcNAc}-L-asparaginyl-[protein]. It participates in protein modification; protein glycosylation. Catalyzes the first committed step in the biosynthesis of complex N-glycans. It controls conversion of high mannose to complex N-glycans; the final hydrolytic step in the N-glycan maturation pathway. This Mus musculus (Mouse) protein is Alpha-mannosidase 2x (Man2a2).